We begin with the raw amino-acid sequence, 447 residues long: UDP-glucosyl transferase 79T1 (447 aa).

Catalysis depends on H18, which acts as the Proton acceptor. D116 acts as the Charge relay in catalysis. UDP is bound by residues S265, W323, V324, H341, T346, and E349.

The protein belongs to the UDP-glycosyltransferase family. As to expression, mainly expressed in flowers, flower buds and young leaves, and, to a lesser extent, in old leaves, stems and roots.

The protein operates within secondary metabolite biosynthesis; terpenoid biosynthesis. Component of the oleanane-type triterpene saponins (e.g. saponarioside A and saponarioside B) biosynthetic pathway, leading to the production of natural products with detergent properties used as traditional sources of soap. A glycosyltransferase that mediates the conversion of QA-triF to QA-triFR via the elongation of the C-28 sugar chain with a deoxyhexose on the D-fucose moiety. In Saponaria officinalis (Common soapwort), this protein is UDP-glucosyl transferase 79T1.